The sequence spans 282 residues: Methyltransferase tpcH (282 aa).

It belongs to the class I-like SAM-binding methyltransferase superfamily. In terms of tissue distribution, specifically expressed in conidia.

It functions in the pathway secondary metabolite biosynthesis. Its function is as follows. Methyltransferase; part of the gene cluster that mediates the biosynthesis of trypacidin, a mycotoxin with antiprotozoal activity and that plays a role in the infection process. The pathway begins with the synthesis of atrochrysone thioester by the polyketide synthase (PKS) tpcC. The atrochrysone carboxyl ACP thioesterase tpcB then breaks the thioester bond and releases the atrochrysone carboxylic acid from tpcC. The decarboxylase tpcK converts atrochrysone carboxylic acid to atrochrysone which is further reduced into emodin anthrone. The next step is performed by the emodin anthrone oxygenase tpcL that catalyzes the oxidation of emodinanthrone to emodin. Emodin O-methyltransferase encoded by tpcA catalyzes methylation of the 8-hydroxy group of emodin to form questin. Ring cleavage of questin by questin oxidase tpcI leads to desmethylsulochrin via several intermediates including questin epoxide. Another methylation step catalyzed by tpcM leads to the formation of sulochrin which is further converted to monomethylsulfochrin by tpcH. Finally, the tpcJ catalyzes the conversion of monomethylsulfochrin to trypacidin. Trypacidin is toxic for human pulmonary and bronchial epithelial cells by initiating the intracellular formation of nitric oxide (NO) and hydrogen peroxide (H(2)O(2)), thus triggering host necrotic cell death. The trypacidin pathway is also able to produce endocrocin via a distinct route from the endocrocin Enc pathway. This chain is Methyltransferase tpcH, found in Aspergillus fumigatus (strain ATCC MYA-4609 / CBS 101355 / FGSC A1100 / Af293) (Neosartorya fumigata).